The primary structure comprises 127 residues: Mediator of RNA polymerase II transcription subunit 31 (127 aa).

Belongs to the Mediator complex subunit 31 family. In terms of assembly, component of the Mediator complex, which is composed of at least 21 subunits that form three structurally distinct submodules. The Mediator head module contains MED6, MED8, MED11, SRB4/MED17, SRB5/MED18, ROX3/MED19, SRB2/MED20 and SRB6/MED22, the middle module contains MED1, MED4, NUT1/MED5, MED7, CSE2/MED9, NUT2/MED10, SRB7/MED21 and SOH1/MED31, and the tail module contains MED2, PGD1/MED3, RGR1/MED14, GAL11/MED15 and SIN4/MED16. The head and the middle modules interact directly with RNA polymerase II, whereas the elongated tail module interacts with gene-specific regulatory proteins.

The protein localises to the nucleus. In terms of biological role, component of the Mediator complex, a coactivator involved in the regulated transcription of nearly all RNA polymerase II-dependent genes. Mediator functions as a bridge to convey information from gene-specific regulatory proteins to the basal RNA polymerase II transcription machinery. The Mediator complex, having a compact conformation in its free form, is recruited to promoters by direct interactions with regulatory proteins and serves for the assembly of a functional preinitiation complex with RNA polymerase II and the general transcription factors. The Mediator complex unfolds to an extended conformation and partially surrounds RNA polymerase II, specifically interacting with the unphosphorylated form of the C-terminal domain (CTD) of RNA polymerase II. The Mediator complex dissociates from the RNA polymerase II holoenzyme and stays at the promoter when transcriptional elongation begins. The protein is Mediator of RNA polymerase II transcription subunit 31 (SOH1) of Saccharomyces cerevisiae (strain ATCC 204508 / S288c) (Baker's yeast).